Here is a 237-residue protein sequence, read N- to C-terminus: Ribonuclease PH (237 aa).

Residues arginine 86 and 124-126 each bind phosphate; that span reads GTR.

The protein belongs to the RNase PH family. As to quaternary structure, homohexameric ring arranged as a trimer of dimers.

The catalysed reaction is tRNA(n+1) + phosphate = tRNA(n) + a ribonucleoside 5'-diphosphate. Its function is as follows. Phosphorolytic 3'-5' exoribonuclease that plays an important role in tRNA 3'-end maturation. Removes nucleotide residues following the 3'-CCA terminus of tRNAs; can also add nucleotides to the ends of RNA molecules by using nucleoside diphosphates as substrates, but this may not be physiologically important. Probably plays a role in initiation of 16S rRNA degradation (leading to ribosome degradation) during starvation. This Methylorubrum extorquens (strain CM4 / NCIMB 13688) (Methylobacterium extorquens) protein is Ribonuclease PH.